A 102-amino-acid polypeptide reads, in one-letter code: uncharacterized protein (102 aa).

Disordered stretches follow at residues 1–21 and 33–71; these read MKRM…GAGE and GSGT…SACT. Residues 1–79 lie on the Extracellular side of the membrane; the sequence is MKRMIRSHGR…CTRTDHQKAD (79 aa). Positions 56 to 71 are enriched in polar residues; the sequence is SSGTRRGSANETSACT. N-linked (GlcNAc...) asparagine; by host glycosylation occurs at asparagine 65. A helical transmembrane segment spans residues 80–97; sequence IGLWFMFLVFGLCSWLAM. Over 98-102 the chain is Cytoplasmic; it reads RYRAQ.

It belongs to the HHV-5 UL15A protein family.

It is found in the host membrane. This is an uncharacterized protein from Human cytomegalovirus (strain Merlin) (HHV-5).